The chain runs to 626 residues: Chaperone protein HtpG (626 aa).

The tract at residues 1 to 343 (MHKQTLSFQA…SADLPLNVSR (343 aa)) is a; substrate-binding. Positions 344–558 (ELLQESRAVK…DGDMSTQLAR (215 aa)) are b. The tract at residues 559–626 (MLKQAGQAVP…YVKRVNALLV (68 aa)) is c.

It belongs to the heat shock protein 90 family. Homodimer.

It localises to the cytoplasm. In terms of biological role, molecular chaperone. Has ATPase activity. The polypeptide is Chaperone protein HtpG (Polaromonas sp. (strain JS666 / ATCC BAA-500)).